Reading from the N-terminus, the 344-residue chain is Ribosomal RNA large subunit methyltransferase Cfr (344 aa).

Glu-90 serves as the catalytic Proton acceptor. Residues 97-330 (KQGWESFCIS…ATVRTQFGSE (234 aa)) form the Radical SAM core domain. Cys-104 and Cys-335 are oxidised to a cystine. Residues Cys-111, Cys-115, and Cys-118 each contribute to the [4Fe-4S] cluster site. Residues 157-158 (GE), Ser-188, 211-213 (SLH), and Asn-292 each bind S-adenosyl-L-methionine. Residue Cys-335 is the S-methylcysteine intermediate of the active site.

The protein belongs to the radical SAM superfamily. RlmN family. Cfr subfamily. The cofactor is [4Fe-4S] cluster.

The protein resides in the cytoplasm. The enzyme catalyses adenosine(2503) in 23S rRNA + 2 reduced [2Fe-2S]-[ferredoxin] + 2 S-adenosyl-L-methionine = 8-methyladenosine(2503) in 23S rRNA + 5'-deoxyadenosine + L-methionine + 2 oxidized [2Fe-2S]-[ferredoxin] + S-adenosyl-L-homocysteine. Its function is as follows. Specifically methylates position 8 of adenine 2503 in 23S rRNA. Confers resistance to some classes of antibiotics. The chain is Ribosomal RNA large subunit methyltransferase Cfr from Clostridium botulinum (strain Hall / ATCC 3502 / NCTC 13319 / Type A).